A 136-amino-acid polypeptide reads, in one-letter code: Pterin-4-alpha-carbinolamine dehydratase 2 (136 aa).

3 positions are modified to N6-acetyllysine; alternate: Lys120, Lys124, and Lys131. N6-succinyllysine; alternate is present on residues Lys120, Lys124, and Lys131.

Belongs to the pterin-4-alpha-carbinolamine dehydratase family. Homotetramer. Interacts with DYRK1B.

It carries out the reaction (4aS,6R)-4a-hydroxy-L-erythro-5,6,7,8-tetrahydrobiopterin = (6R)-L-erythro-6,7-dihydrobiopterin + H2O. In terms of biological role, involved in tetrahydrobiopterin biosynthesis. Seems to both prevent the formation of 7-pterins and accelerate the formation of quinonoid-BH2. Regulates the dimerization of homeodomain protein HNF-1-alpha and enhances its transcriptional activity. The chain is Pterin-4-alpha-carbinolamine dehydratase 2 (Pcbd2) from Mus musculus (Mouse).